The sequence spans 254 residues: MSFTVIIPARFASSRLPGKPLADIAGKPMIQHVFEKALQSGANRVIIATDNENVADVVKNFGAEVCMTSVNHNSGTERLAEVVEKLAIPDNEIIVNIQGDEPLIPPVIVRQVADNLAKFNVNMASLAVKIHDGEELFNPNAVKVLTDKDGYVLYFSRSVIPYDRDQFMNLQDVQKVQLADAYLRHIGIYAYRSGFIKQYMQWAPTQLENLEKLEQLRVLYNGERIHVELAKEVPAVGVDTAEDLEKVRLILAKD.

The protein belongs to the KdsB family.

Its subcellular location is the cytoplasm. It catalyses the reaction 3-deoxy-alpha-D-manno-oct-2-ulosonate + CTP = CMP-3-deoxy-beta-D-manno-octulosonate + diphosphate. It functions in the pathway nucleotide-sugar biosynthesis; CMP-3-deoxy-D-manno-octulosonate biosynthesis; CMP-3-deoxy-D-manno-octulosonate from 3-deoxy-D-manno-octulosonate and CTP: step 1/1. The protein operates within bacterial outer membrane biogenesis; lipopolysaccharide biosynthesis. Activates KDO (a required 8-carbon sugar) for incorporation into bacterial lipopolysaccharide in Gram-negative bacteria. This is 3-deoxy-manno-octulosonate cytidylyltransferase from Haemophilus influenzae (strain PittGG).